The sequence spans 516 residues: Protein indeterminate-domain 4, chloroplastic (516 aa).

The segment covering 1 to 26 (MSSSSYNTSVIPSSSSSAQPFFITSS) has biased composition (low complexity). The disordered stretch occupies residues 1–68 (MSSSSYNTSV…QPGNPNPDAE (68 aa)). A chloroplast-targeting transit peptide spans 1-70 (MSSSSYNTSV…GNPNPDAEVV (70 aa)). The residue at position 73 (Ser73) is a Phosphoserine. 2 C2H2-type zinc fingers span residues 83-105 (FICD…RRGH) and 124-154 (YLCP…YRKH). The Nuclear localization signal motif lies at 146-153 (IKKHYYRK). A C2H2-type 2; degenerate zinc finger spans residues 159–182 (WKCEKCSKRYAVQSDWKAHSKTCG). The Zn(2+) site is built by Cys161, Cys164, His177, Cys181, Cys188, Cys190, His203, and Cys207. The segment at 186 to 209 (YRCDCGTIFSRRDSYITHRAFCDA) adopts a CCHC-type 2; atypical zinc-finger fold. Residues 196–208 (RRDSYITHRAFCD) form an SHR-binding region. The disordered stretch occupies residues 483-516 (NRGGGGGGRGSARGGVSLDGEAKFPEQNYPFGRG). Positions 484-495 (RGGGGGGRGSAR) are enriched in gly residues.

As to quaternary structure, binds to RGA and SCL3 competitively in the nucleus.

It is found in the plastid. The protein resides in the chloroplast. Its subcellular location is the nucleus. In terms of biological role, transcription factor that may act a transcriptional activator of nuclear-encoded photosynthetic gene expression. Binds DNA via its zinc fingers. Recognizes and binds to SCL3 promoter sequence 5'-AGACAA-3' to promote its expression when in complex with RGA. This Arabidopsis thaliana (Mouse-ear cress) protein is Protein indeterminate-domain 4, chloroplastic.